Here is a 249-residue protein sequence, read N- to C-terminus: Pyridoxine 5'-phosphate synthase (249 aa).

Asparagine 7 contacts 3-amino-2-oxopropyl phosphate. 9-10 (DH) is a binding site for 1-deoxy-D-xylulose 5-phosphate. Arginine 18 contributes to the 3-amino-2-oxopropyl phosphate binding site. Catalysis depends on histidine 43, which acts as the Proton acceptor. 1-deoxy-D-xylulose 5-phosphate is bound by residues arginine 45 and histidine 50. Glutamate 70 acts as the Proton acceptor in catalysis. Threonine 100 contributes to the 1-deoxy-D-xylulose 5-phosphate binding site. The active-site Proton donor is histidine 190. Residues glycine 191 and 212–213 (GH) contribute to the 3-amino-2-oxopropyl phosphate site.

Belongs to the PNP synthase family. Homooctamer; tetramer of dimers.

Its subcellular location is the cytoplasm. The enzyme catalyses 3-amino-2-oxopropyl phosphate + 1-deoxy-D-xylulose 5-phosphate = pyridoxine 5'-phosphate + phosphate + 2 H2O + H(+). It functions in the pathway cofactor biosynthesis; pyridoxine 5'-phosphate biosynthesis; pyridoxine 5'-phosphate from D-erythrose 4-phosphate: step 5/5. In terms of biological role, catalyzes the complicated ring closure reaction between the two acyclic compounds 1-deoxy-D-xylulose-5-phosphate (DXP) and 3-amino-2-oxopropyl phosphate (1-amino-acetone-3-phosphate or AAP) to form pyridoxine 5'-phosphate (PNP) and inorganic phosphate. The chain is Pyridoxine 5'-phosphate synthase from Synechococcus sp. (strain CC9902).